Here is a 369-residue protein sequence, read N- to C-terminus: Nuclear pore complex-interacting protein family member A6 (369 aa).

Residues 151–170 (SMKEREHGEKERQVSEAEEN) form a disordered region.

The protein belongs to the NPIP family.

The chain is Nuclear pore complex-interacting protein family member A6 from Homo sapiens (Human).